A 467-amino-acid polypeptide reads, in one-letter code: Coiled-coil domain-containing protein 174 (467 aa).

Disordered regions lie at residues 47-76 and 129-163; these read INKK…LEEQ and GATR…SEEW. A compositionally biased stretch (basic and acidic residues) spans 64–76; the sequence is RAEKDAEQKLEEQ. The stretch at 64–99 forms a coiled coil; it reads RAEKDAEQKLEEQKTLDKAREKLEEKAKLYEKMTKG. Acidic residues predominate over residues 136–147; that stretch reads IEEERDDDDKEE. The residue at position 198 (serine 198) is a Phosphoserine. Residues 268–310 are a coiled coil; it reads LEMLREQTTDQRIKRENIKEKRKAMLEARLAKLRQKKMKKSKE. Disordered stretches follow at residues 301 to 365 and 379 to 454; these read RQKK…IREW and KQSE…VTFQ. Basic and acidic residues-rich tracts occupy residues 349–365 and 379–390; these read IQER…IREW and KQSELRAERDPE. Residues 406 to 415 are compositionally biased toward polar residues; it reads PMSSQPQSRP. Residues 423–446 show a composition bias toward low complexity; the sequence is GHSSGQSQEPSSSHTSTPASESSP.

The protein localises to the nucleus. Probably involved in neuronal development. In Mus musculus (Mouse), this protein is Coiled-coil domain-containing protein 174 (Ccdc174).